A 632-amino-acid polypeptide reads, in one-letter code: Probable potassium transport system protein Kup 1 (632 aa).

A run of 12 helical transmembrane segments spans residues 19–39 (LVLGAVGVVFGDIGTSPLYAL), 59–79 (VISMLFWAMIIVVSIKYVVFV), 110–130 (VLMMLGIFGACMFYGDAVITP), 146–166 (PQLSQFVIPITLMILAALFLI), 178–198 (FGPIMTAWFLALGGLGILHLV), 213–233 (ITFLVEHALQAFIVLGSVFLV), 256–276 (WFVLVMPCLMLNYFGQGAMLL), 298–318 (MVLLATCATVIASQAVISGAF), 346–366 (IYLPVINWLLLVLVIGVVISF), 373–393 (AAAYGIAVTTTMVITTILAAV), 403–423 (PALVAVVGLAFIVVDLSFFAA), and 428–448 (VAEGGWFPLLLGSAAFFLLMT).

This sequence belongs to the HAK/KUP transporter (TC 2.A.72) family.

The protein resides in the cell inner membrane. The catalysed reaction is K(+)(in) + H(+)(in) = K(+)(out) + H(+)(out). Functionally, transport of potassium into the cell. Likely operates as a K(+):H(+) symporter. The protein is Probable potassium transport system protein Kup 1 of Cupriavidus necator (strain ATCC 17699 / DSM 428 / KCTC 22496 / NCIMB 10442 / H16 / Stanier 337) (Ralstonia eutropha).